We begin with the raw amino-acid sequence, 168 residues long: HTH-type transcriptional regulator IscR (168 aa).

The HTH rrf2-type domain occupies 2–131; the sequence is KLTSKGRYAV…NNITLGELMK (130 aa). Residues 28-51 constitute a DNA-binding region (H-T-H motif); that stretch reads LADISERQGISLSYLEQLFSKLRK. [2Fe-2S] cluster-binding residues include cysteine 92, cysteine 98, and cysteine 104.

[2Fe-2S] cluster is required as a cofactor.

Regulates the transcription of several operons and genes involved in the biogenesis of Fe-S clusters and Fe-S-containing proteins. The polypeptide is HTH-type transcriptional regulator IscR (Vibrio campbellii (strain ATCC BAA-1116)).